The following is a 471-amino-acid chain: 3-isopropylmalate dehydratase large subunit (471 aa).

[4Fe-4S] cluster contacts are provided by cysteine 351, cysteine 414, and cysteine 417.

This sequence belongs to the aconitase/IPM isomerase family. LeuC type 1 subfamily. Heterodimer of LeuC and LeuD. It depends on [4Fe-4S] cluster as a cofactor.

It catalyses the reaction (2R,3S)-3-isopropylmalate = (2S)-2-isopropylmalate. Its pathway is amino-acid biosynthesis; L-leucine biosynthesis; L-leucine from 3-methyl-2-oxobutanoate: step 2/4. In terms of biological role, catalyzes the isomerization between 2-isopropylmalate and 3-isopropylmalate, via the formation of 2-isopropylmaleate. In Colwellia psychrerythraea (strain 34H / ATCC BAA-681) (Vibrio psychroerythus), this protein is 3-isopropylmalate dehydratase large subunit.